Consider the following 251-residue polypeptide: Small ribosomal subunit protein uS3 (251 aa).

Positions 39-111 constitute a KH type-2 domain; the sequence is IRELINNFSK…DVDLNILEVK (73 aa).

Belongs to the universal ribosomal protein uS3 family. As to quaternary structure, part of the 30S ribosomal subunit. Forms a tight complex with proteins S10 and S14.

Binds the lower part of the 30S subunit head. Binds mRNA in the 70S ribosome, positioning it for translation. The polypeptide is Small ribosomal subunit protein uS3 (Phytoplasma sp. (strain STRAWB1)).